We begin with the raw amino-acid sequence, 504 residues long: Anaerobic nitric oxide reductase transcription regulator NorR (504 aa).

D57 carries the post-translational modification 4-aspartylphosphate. Residues 187 to 416 form the Sigma-54 factor interaction domain; that stretch reads MIGLSPGMTQ…LEHAIHRAVV (230 aa). Residues 215-222 and 278-287 each bind ATP; these read GETGTGKE and ADNGTLFLDE. A DNA-binding region (H-T-H motif) is located at residues 479–498; the sequence is WAACARMLETDVANLHRLAK.

It participates in nitrogen metabolism; nitric oxide reduction. Required for the expression of anaerobic nitric oxide (NO) reductase, acts as a transcriptional activator for at least the norVW operon. Activation also requires sigma-54. The sequence is that of Anaerobic nitric oxide reductase transcription regulator NorR from Escherichia coli (strain SE11).